A 371-amino-acid polypeptide reads, in one-letter code: UDP-N-acetylglucosamine--N-acetylmuramyl-(pentapeptide) pyrophosphoryl-undecaprenol N-acetylglucosamine transferase (371 aa).

Residues 15–17 (TGG), Asn126, Arg172, Ser199, Ile256, 275–280 (ALTVSE), and Gln301 contribute to the UDP-N-acetyl-alpha-D-glucosamine site.

The protein belongs to the glycosyltransferase 28 family. MurG subfamily.

Its subcellular location is the cell inner membrane. The catalysed reaction is di-trans,octa-cis-undecaprenyl diphospho-N-acetyl-alpha-D-muramoyl-L-alanyl-D-glutamyl-meso-2,6-diaminopimeloyl-D-alanyl-D-alanine + UDP-N-acetyl-alpha-D-glucosamine = di-trans,octa-cis-undecaprenyl diphospho-[N-acetyl-alpha-D-glucosaminyl-(1-&gt;4)]-N-acetyl-alpha-D-muramoyl-L-alanyl-D-glutamyl-meso-2,6-diaminopimeloyl-D-alanyl-D-alanine + UDP + H(+). It participates in cell wall biogenesis; peptidoglycan biosynthesis. Functionally, cell wall formation. Catalyzes the transfer of a GlcNAc subunit on undecaprenyl-pyrophosphoryl-MurNAc-pentapeptide (lipid intermediate I) to form undecaprenyl-pyrophosphoryl-MurNAc-(pentapeptide)GlcNAc (lipid intermediate II). This Francisella tularensis subsp. tularensis (strain WY96-3418) protein is UDP-N-acetylglucosamine--N-acetylmuramyl-(pentapeptide) pyrophosphoryl-undecaprenol N-acetylglucosamine transferase.